The following is a 156-amino-acid chain: Ribosome maturation factor RimP (156 aa).

It belongs to the RimP family.

The protein resides in the cytoplasm. Its function is as follows. Required for maturation of 30S ribosomal subunits. The protein is Ribosome maturation factor RimP of Lachnospira eligens (strain ATCC 27750 / DSM 3376 / VPI C15-48 / C15-B4) (Eubacterium eligens).